The primary structure comprises 361 residues: tRNA-specific 2-thiouridylase MnmA (361 aa).

ATP-binding positions include 11–18 (GMSGGVDS) and Met-37. The interaction with target base in tRNA stretch occupies residues 97–99 (NPD). Cys-102 serves as the catalytic Nucleophile. The cysteines at positions 102 and 199 are disulfide-linked. Gly-126 lines the ATP pocket. The segment at 149 to 151 (KDQ) is interaction with tRNA. Catalysis depends on Cys-199, which acts as the Cysteine persulfide intermediate. The tract at residues 311 to 312 (RY) is interaction with tRNA.

It belongs to the MnmA/TRMU family.

The protein localises to the cytoplasm. It carries out the reaction S-sulfanyl-L-cysteinyl-[protein] + uridine(34) in tRNA + AH2 + ATP = 2-thiouridine(34) in tRNA + L-cysteinyl-[protein] + A + AMP + diphosphate + H(+). Catalyzes the 2-thiolation of uridine at the wobble position (U34) of tRNA, leading to the formation of s(2)U34. The polypeptide is tRNA-specific 2-thiouridylase MnmA (Cupriavidus taiwanensis (strain DSM 17343 / BCRC 17206 / CCUG 44338 / CIP 107171 / LMG 19424 / R1) (Ralstonia taiwanensis (strain LMG 19424))).